Consider the following 354-residue polypeptide: Rhodopsin (354 aa).

At 1–36 (MNGTEGPYFYIPMLNTTGVVRSPYEYPQYYLVNPAA) the chain is on the extracellular side. N-linked (GlcNAc...) asparagine glycosylation is found at asparagine 2 and asparagine 15. A helical membrane pass occupies residues 37 to 61 (YAVLGAYMFFLILVGFPINFLTLYV). Topologically, residues 62 to 73 (TIEHKKLRTPLN) are cytoplasmic. A helical transmembrane segment spans residues 74–96 (YILLNLAVADLFMVFGGFTTTIY). The Extracellular segment spans residues 97–110 (TSMHGYFVLGRLGC). Cysteine 110 and cysteine 187 are disulfide-bonded. The chain crosses the membrane as a helical span at residues 111–133 (NVEGFSATLGGEIALWSLVVLAI). A 'Ionic lock' involved in activated form stabilization motif is present at residues 134–136 (ERW). Over 134–152 (ERWVVVCKPISNFRFGENH) the chain is Cytoplasmic. Residues 153 to 173 (AIMGVAFTWFMAAACAVPPLF) form a helical membrane-spanning segment. Residues 174 to 202 (GWSRYIPEGMQCSCGIDYYTRAEGFNNES) are Extracellular-facing. Asparagine 200 is a glycosylation site (N-linked (GlcNAc...) asparagine). Residues 203–224 (FVIYMFTCHFCIPLMVVFFCYG) traverse the membrane as a helical segment. At 225-252 (RLVCAVKEAAAAQQESETTQRAEREVTR) the chain is on the cytoplasmic side. Residues 253 to 274 (MVIIMVVSFLVSWVPYASVAWY) form a helical membrane-spanning segment. The Extracellular segment spans residues 275–286 (IFTHQGSEFGPL). A helical transmembrane segment spans residues 287–308 (FMTIPAFFAKSSSIYNPMIYIC). Lysine 296 carries the post-translational modification N6-(retinylidene)lysine. Residues 309-354 (MNKQFRHCMITTLCCGKNPFEEEEGASSTASKTEASSVSSSSVSPA) lie on the Cytoplasmic side of the membrane. 2 S-palmitoyl cysteine lipidation sites follow: cysteine 322 and cysteine 323. The interval 329–354 (EEEEGASSTASKTEASSVSSSSVSPA) is disordered. Positions 334 to 354 (ASSTASKTEASSVSSSSVSPA) are enriched in low complexity.

The protein belongs to the G-protein coupled receptor 1 family. Opsin subfamily. In terms of processing, phosphorylated on some or all of the serine and threonine residues present in the C-terminal region. Post-translationally, contains one covalently linked retinal chromophore.

The protein localises to the membrane. The protein resides in the cell projection. Its subcellular location is the cilium. It is found in the photoreceptor outer segment. In terms of biological role, photoreceptor required for image-forming vision at low light intensity. While most salt water fish species use retinal as chromophore, most freshwater fish use 3-dehydroretinal, or a mixture of retinal and 3-dehydroretinal. Light-induced isomerization of 11-cis to all-trans retinal triggers a conformational change that activates signaling via G-proteins. Subsequent receptor phosphorylation mediates displacement of the bound G-protein alpha subunit by arrestin and terminates signaling. This chain is Rhodopsin (rho), found in Atherina boyeri (Big-scale sand smelt).